Consider the following 247-residue polypeptide: DNA polymerase sliding clamp (247 aa).

It belongs to the PCNA family. In terms of assembly, homotrimer. The subunits circularize to form a toroid; DNA passes through its center. Replication factor C (RFC) is required to load the toroid on the DNA.

Sliding clamp subunit that acts as a moving platform for DNA processing. Responsible for tethering the catalytic subunit of DNA polymerase and other proteins to DNA during high-speed replication. The sequence is that of DNA polymerase sliding clamp from Natronomonas pharaonis (strain ATCC 35678 / DSM 2160 / CIP 103997 / JCM 8858 / NBRC 14720 / NCIMB 2260 / Gabara) (Halobacterium pharaonis).